We begin with the raw amino-acid sequence, 212 residues long: Guanylate kinase (212 aa).

In terms of domain architecture, Guanylate kinase-like spans 5–187; sequence GILCIISAPS…ALMHLQSIML (183 aa). 12 to 19 lines the ATP pocket; that stretch reads APSGTGKS.

The protein belongs to the guanylate kinase family.

It localises to the cytoplasm. It catalyses the reaction GMP + ATP = GDP + ADP. Its function is as follows. Essential for recycling GMP and indirectly, cGMP. The chain is Guanylate kinase from Blochmanniella pennsylvanica (strain BPEN).